A 253-amino-acid polypeptide reads, in one-letter code: 5'-nucleotidase SurE (253 aa).

Asp8, Asp9, Ser40, and Asn93 together coordinate a divalent metal cation.

It belongs to the SurE nucleotidase family. A divalent metal cation is required as a cofactor.

It is found in the cytoplasm. It catalyses the reaction a ribonucleoside 5'-phosphate + H2O = a ribonucleoside + phosphate. Nucleotidase that shows phosphatase activity on nucleoside 5'-monophosphates. This is 5'-nucleotidase SurE from Haemophilus ducreyi (strain 35000HP / ATCC 700724).